The chain runs to 330 residues: tRNA U34 carboxymethyltransferase (330 aa).

Carboxy-S-adenosyl-L-methionine is bound by residues Lys-91, Trp-105, Lys-110, Gly-130, 152 to 154 (DPS), 181 to 182 (IE), Met-196, Tyr-200, and Arg-315.

It belongs to the class I-like SAM-binding methyltransferase superfamily. CmoB family. In terms of assembly, homotetramer.

It carries out the reaction carboxy-S-adenosyl-L-methionine + 5-hydroxyuridine(34) in tRNA = 5-carboxymethoxyuridine(34) in tRNA + S-adenosyl-L-homocysteine + H(+). Catalyzes carboxymethyl transfer from carboxy-S-adenosyl-L-methionine (Cx-SAM) to 5-hydroxyuridine (ho5U) to form 5-carboxymethoxyuridine (cmo5U) at position 34 in tRNAs. The sequence is that of tRNA U34 carboxymethyltransferase from Shewanella pealeana (strain ATCC 700345 / ANG-SQ1).